A 181-amino-acid chain; its full sequence is Peptidyl-tRNA hydrolase (181 aa).

TRNA is bound at residue Tyr14. Residue His19 is the Proton acceptor of the active site. TRNA is bound by residues Tyr62, Asn64, and Asn108.

This sequence belongs to the PTH family. As to quaternary structure, monomer.

It is found in the cytoplasm. It carries out the reaction an N-acyl-L-alpha-aminoacyl-tRNA + H2O = an N-acyl-L-amino acid + a tRNA + H(+). Functionally, hydrolyzes ribosome-free peptidyl-tRNAs (with 1 or more amino acids incorporated), which drop off the ribosome during protein synthesis, or as a result of ribosome stalling. In terms of biological role, catalyzes the release of premature peptidyl moieties from peptidyl-tRNA molecules trapped in stalled 50S ribosomal subunits, and thus maintains levels of free tRNAs and 50S ribosomes. The protein is Peptidyl-tRNA hydrolase of Campylobacter jejuni subsp. jejuni serotype O:23/36 (strain 81-176).